The primary structure comprises 336 residues: MASWALSAALLCLGGAFAYSELHSLSLREGSALGQATVPGPPEEEQPVTKDCGIAPLRGAVEGSRIIGGSQADTGAWPWQVSLQVQDGDILMHVCGGALVRDRWVLTAAHCTKEARDPLKWRAVMGTNDLTRSPYHSRNIRITDIIIPPDFIMETFVNDIALFRLKRAVRYNDYIQPICLPFGVFQKLDQNTACFISGWGRTREEGNGTTILQEAKVHFISREVCSSDQGYSGMIPNTSFCAGHENGTFDSCRGDSGGPLMCYLPEHSRYFVMGITSYGHGCGRRHFPGVYSNPSFFQEWMTHYLSQGNINRLFNMDIVLGQVLTALGSVILLGVT.

An N-terminal signal peptide occupies residues 1 to 18; the sequence is MASWALSAALLCLGGAFA. The Extracellular portion of the chain corresponds to 19 to 312; sequence YSELHSLSLR…HYLSQGNINR (294 aa). Residues 66–306 enclose the Peptidase S1 domain; sequence IIGGSQADTG…FQEWMTHYLS (241 aa). A disulfide bond links cysteine 95 and cysteine 111. Active-site charge relay system residues include histidine 110 and aspartate 159. 3 disulfides stabilise this stretch: cysteine 194/cysteine 262, cysteine 225/cysteine 241, and cysteine 252/cysteine 282. 3 N-linked (GlcNAc...) asparagine glycosylation sites follow: asparagine 207, asparagine 237, and asparagine 246. Catalysis depends on serine 256, which acts as the Charge relay system. The chain crosses the membrane as a helical span at residues 313–333; the sequence is LFNMDIVLGQVLTALGSVILL. Residues 334-336 lie on the Cytoplasmic side of the membrane; that stretch reads GVT.

Belongs to the peptidase S1 family. In terms of tissue distribution, exclusively expressed in the testis, from spermatocytes to elongated spermatids (at protein level).

It is found in the cell membrane. Its subcellular location is the cytoplasmic vesicle. The protein localises to the secretory vesicle. The protein resides in the acrosome. Required for male fertility. Plays a critical role in sperm capacitation and acrosome reactions during fertilization, and also plays a role in the regulation of proteins involved in spermatogenesis. Regulates protein pathways that promote chromosomal synapsis formation, double-strand break repair, formation of the inner mitochondrial membrane cristae and apoptosis in developing sperm. Required for normal sperm motility and binding to the zona pellucida, potentially via a role in ADAM3 protein maturation. The sequence is that of Transmembrane protease serine 12 from Mus musculus (Mouse).